The following is a 286-amino-acid chain: ATP synthase gamma chain (286 aa).

Belongs to the ATPase gamma chain family. F-type ATPases have 2 components, CF(1) - the catalytic core - and CF(0) - the membrane proton channel. CF(1) has five subunits: alpha(3), beta(3), gamma(1), delta(1), epsilon(1). CF(0) has three main subunits: a, b and c.

The protein localises to the cell inner membrane. In terms of biological role, produces ATP from ADP in the presence of a proton gradient across the membrane. The gamma chain is believed to be important in regulating ATPase activity and the flow of protons through the CF(0) complex. This is ATP synthase gamma chain from Pseudomonas putida (strain GB-1).